The following is a 196-amino-acid chain: Peptidoglycan recognition protein (196 aa).

The signal sequence occupies residues 1–23 (MARLHSAVVLALALSSLLTEIAA). 2 disulfide bridges follow: Cys-25-Cys-147 and Cys-61-Cys-67. An N-acetylmuramoyl-L-alanine amidase domain is found at 46–173 (RPVSLVIVQH…RQLIASESPG (128 aa)).

This sequence belongs to the N-acetylmuramoyl-L-alanine amidase 2 family. Monomer. In terms of tissue distribution, constitutively expressed in fat body, epithelial cells and hemocytes. Not detected in Malpighian tubules, silk gland or midgut.

Its function is as follows. Binds specifically to peptidoglycan and triggers the propenoloxidase cascade which is an important insect defense mechanism. The sequence is that of Peptidoglycan recognition protein from Bombyx mori (Silk moth).